The following is a 120-amino-acid chain: Small ribosomal subunit protein bS16 (120 aa).

The segment at 81-120 (GLAKRPARNNPQKAEPGEKAKERAAKRAEKAAAPAEDAAA) is disordered. Basic and acidic residues predominate over residues 95–110 (EPGEKAKERAAKRAEK). Residues 111–120 (AAAPAEDAAA) show a composition bias toward low complexity.

The protein belongs to the bacterial ribosomal protein bS16 family.

This chain is Small ribosomal subunit protein bS16, found in Methylobacterium radiotolerans (strain ATCC 27329 / DSM 1819 / JCM 2831 / NBRC 15690 / NCIMB 10815 / 0-1).